A 316-amino-acid chain; its full sequence is MNLSPNQKADVLIESLPYIKKFYNEIVVIKYGGSAMVNDELKESIIKDIVLMKYVGMHPVVVHGGGPEITNMLKVFDKESKFVDGLRVTDQATMEITEMVLLGKVCQEIVTRINQNGVRSIGICGKDGSMIKTVPKDPELGLVGGITSIDTDLIKTIIEKGYIPVISPIGCGPAGESHNINADEVAGKLAAALGAKKLMLITDVAGVLRDQHDEASLISDIKTNEIEEYIETGVIKGGMIPKISCCFDAVANGVERAHIIDGRKSHSMLLEIFTDQGVGTMITHGGDQNGNSKNNKQWKSIFNEHLWENAYSLPGR.

Substrate contacts are provided by residues 65–66 (GG), Arg-87, and Asn-179.

This sequence belongs to the acetylglutamate kinase family. ArgB subfamily.

The protein resides in the cytoplasm. It catalyses the reaction N-acetyl-L-glutamate + ATP = N-acetyl-L-glutamyl 5-phosphate + ADP. Its pathway is amino-acid biosynthesis; L-arginine biosynthesis; N(2)-acetyl-L-ornithine from L-glutamate: step 2/4. Its function is as follows. Catalyzes the ATP-dependent phosphorylation of N-acetyl-L-glutamate. The sequence is that of Acetylglutamate kinase from Alkaliphilus metalliredigens (strain QYMF).